The chain runs to 185 residues: ATP synthase subunit delta (185 aa).

This sequence belongs to the ATPase delta chain family. As to quaternary structure, F-type ATPases have 2 components, F(1) - the catalytic core - and F(0) - the membrane proton channel. F(1) has five subunits: alpha(3), beta(3), gamma(1), delta(1), epsilon(1). CF(0) has four main subunits: a(1), b(1), b'(1) and c(10-14). The alpha and beta chains form an alternating ring which encloses part of the gamma chain. F(1) is attached to F(0) by a central stalk formed by the gamma and epsilon chains, while a peripheral stalk is formed by the delta, b and b' chains.

It is found in the cellular thylakoid membrane. F(1)F(0) ATP synthase produces ATP from ADP in the presence of a proton or sodium gradient. F-type ATPases consist of two structural domains, F(1) containing the extramembraneous catalytic core and F(0) containing the membrane proton channel, linked together by a central stalk and a peripheral stalk. During catalysis, ATP synthesis in the catalytic domain of F(1) is coupled via a rotary mechanism of the central stalk subunits to proton translocation. Functionally, this protein is part of the stalk that links CF(0) to CF(1). It either transmits conformational changes from CF(0) to CF(1) or is implicated in proton conduction. Its function is as follows. The complex from the organism is particularly stable to disruption and remains functional after 6 hrs at 55 degrees Celsius. This chain is ATP synthase subunit delta, found in Thermosynechococcus vestitus (strain NIES-2133 / IAM M-273 / BP-1).